Here is a 1179-residue protein sequence, read N- to C-terminus: Putative ankyrin repeat protein RF_0381 (1179 aa).

ANK repeat units follow at residues 282 to 311 (NGYQ…MHRQ), 604 to 633 (NKDQ…NPNA), 637 to 666 (HGVI…DVNA), 670 to 699 (NGET…NIHA), 703 to 732 (NGET…DVNA), 736 to 765 (NGLT…DVNA), 769 to 798 (SGET…DVNA), 802 to 831 (NGET…NVNN), 833 to 860 (KTIL…DIHA), 864 to 893 (SGET…DIHA), 897 to 926 (SGET…DIHA), 930 to 959 (SGET…DIHA), 963 to 992 (SGET…DINT), 996 to 1025 (DGLT…DVNA), 1029 to 1058 (SGET…DVNA), 1062 to 1091 (DGLT…DVNA), 1095 to 1124 (SGET…DINT), and 1128 to 1157 (SGET…DINL).

This chain is Putative ankyrin repeat protein RF_0381, found in Rickettsia felis (strain ATCC VR-1525 / URRWXCal2) (Rickettsia azadi).